The sequence spans 484 residues: Glutamate--tRNA ligase (484 aa).

Positions 11 to 21 (PSPTGLLHIGN) match the 'HIGH' region motif. A 'KMSKS' region motif is present at residues 255-259 (KLSKR). K258 provides a ligand contact to ATP.

This sequence belongs to the class-I aminoacyl-tRNA synthetase family. Glutamate--tRNA ligase type 1 subfamily. Monomer.

The protein resides in the cytoplasm. The enzyme catalyses tRNA(Glu) + L-glutamate + ATP = L-glutamyl-tRNA(Glu) + AMP + diphosphate. In terms of biological role, catalyzes the attachment of glutamate to tRNA(Glu) in a two-step reaction: glutamate is first activated by ATP to form Glu-AMP and then transferred to the acceptor end of tRNA(Glu). The sequence is that of Glutamate--tRNA ligase from Streptococcus suis (strain 98HAH33).